The primary structure comprises 443 residues: Sensor histidine protein kinase HK06 (443 aa).

The next 2 membrane-spanning stretches (helical) occupy residues 16 to 36 and 140 to 160; these read FAIL…TFPF and ILLL…FVFS. The HAMP domain occupies 165–217; sequence KRLLNPLFYISEVTSKMQDLDDNIRFDESRKDEVGEVGKQINGMYEHLLKVIH. Positions 239 to 443 constitute a Histidine kinase domain; that stretch reads GASHELKTPL…EHGMEFKISL (205 aa). A Phosphohistidine; by autocatalysis modification is found at histidine 242.

The protein localises to the cell membrane. The enzyme catalyses ATP + protein L-histidine = ADP + protein N-phospho-L-histidine.. Its function is as follows. Member of the two-component regulatory system HK06/RR06 involved in regulation of target genes, including choline-binding protein CbpA. Has been shown in one study to not be required for regulation of expression of choline-binding protein CbpA. This chain is Sensor histidine protein kinase HK06, found in Streptococcus pneumoniae serotype 2 (strain D39 / NCTC 7466).